Consider the following 635-residue polypeptide: Threonine--tRNA ligase (635 aa).

The TGS domain maps to 1–61 (MIAITLPDGS…DRDVALAIIT (61 aa)). The tract at residues 242–533 (DHRKLGKSLD…LLENHAGALP (292 aa)) is catalytic. 3 residues coordinate Zn(2+): Cys-333, His-384, and His-510.

The protein belongs to the class-II aminoacyl-tRNA synthetase family. As to quaternary structure, homodimer. The cofactor is Zn(2+).

Its subcellular location is the cytoplasm. The enzyme catalyses tRNA(Thr) + L-threonine + ATP = L-threonyl-tRNA(Thr) + AMP + diphosphate + H(+). Its function is as follows. Catalyzes the attachment of threonine to tRNA(Thr) in a two-step reaction: L-threonine is first activated by ATP to form Thr-AMP and then transferred to the acceptor end of tRNA(Thr). Also edits incorrectly charged L-seryl-tRNA(Thr). The protein is Threonine--tRNA ligase of Cupriavidus pinatubonensis (strain JMP 134 / LMG 1197) (Cupriavidus necator (strain JMP 134)).